We begin with the raw amino-acid sequence, 392 residues long: Nuclear speckle splicing regulatory protein 1 homolog (392 aa).

3 disordered regions span residues 1–73 (MASK…IFDY), 113–169 (RQLE…AFND), and 187–357 (LLND…ARLD). Composition is skewed to basic and acidic residues over residues 54 to 65 (KAAEREHQKAEA), 113 to 132 (RQLE…REKE), 149 to 160 (KQQEEVKKHREQ), 205 to 238 (QKNV…KSIY), and 313 to 357 (KSIE…ARLD). Residues 76 to 132 (NYDEIQAIKNEKKEEARKADKNRESKYAENIIKAHARRQLEQFSREERQQLREREKE) adopt a coiled-coil conformation.

Belongs to the NSRP1 family. In terms of tissue distribution, expressed in the intestine, nervous system and head neurons in both larvae and adults. Expressed in the distal tip cell.

It is found in the cytoplasm. It localises to the nucleus. Functionally, required for the cessation of distal tip cell migration at the end of larval morphogenesis. This chain is Nuclear speckle splicing regulatory protein 1 homolog (ccdc-55), found in Caenorhabditis elegans.